The sequence spans 194 residues: Peptidyl-tRNA hydrolase (194 aa).

Y17 provides a ligand contact to tRNA. The Proton acceptor role is filled by H22. Positions 68, 70, and 116 each coordinate tRNA.

Belongs to the PTH family. As to quaternary structure, monomer.

The protein localises to the cytoplasm. The catalysed reaction is an N-acyl-L-alpha-aminoacyl-tRNA + H2O = an N-acyl-L-amino acid + a tRNA + H(+). Its function is as follows. Hydrolyzes ribosome-free peptidyl-tRNAs (with 1 or more amino acids incorporated), which drop off the ribosome during protein synthesis, or as a result of ribosome stalling. Functionally, catalyzes the release of premature peptidyl moieties from peptidyl-tRNA molecules trapped in stalled 50S ribosomal subunits, and thus maintains levels of free tRNAs and 50S ribosomes. This Haemophilus influenzae (strain 86-028NP) protein is Peptidyl-tRNA hydrolase.